The sequence spans 131 residues: Hydrogenase maturation factor HypA (131 aa).

His-2 is a binding site for Ni(2+). Zn(2+)-binding residues include Cys-73, Cys-76, Cys-105, and Cys-108.

It belongs to the HypA/HybF family.

Involved in the maturation of [NiFe] hydrogenases. Required for nickel insertion into the metal center of the hydrogenase. This is Hydrogenase maturation factor HypA from Thermomicrobium roseum (strain ATCC 27502 / DSM 5159 / P-2).